Reading from the N-terminus, the 106-residue chain is Iron-sulfur cluster assembly protein CyaY (106 aa).

This sequence belongs to the frataxin family.

Functionally, involved in iron-sulfur (Fe-S) cluster assembly. May act as a regulator of Fe-S biogenesis. The polypeptide is Iron-sulfur cluster assembly protein CyaY (Pectobacterium atrosepticum (strain SCRI 1043 / ATCC BAA-672) (Erwinia carotovora subsp. atroseptica)).